Consider the following 131-residue polypeptide: Small ribosomal subunit protein bS6 (131 aa).

Positions 96–131 are disordered; that stretch reads VTEASPMAKAKDERDSRRGPAGDRSYDEANAEEIAE. The span at 104-122 shows a compositional bias: basic and acidic residues; it reads KAKDERDSRRGPAGDRSYD.

Belongs to the bacterial ribosomal protein bS6 family.

In terms of biological role, binds together with bS18 to 16S ribosomal RNA. The chain is Small ribosomal subunit protein bS6 from Shewanella sp. (strain MR-4).